Reading from the N-terminus, the 233-residue chain is 2,3,4,5-tetrahydropyridine-2,6-dicarboxylate N-acetyltransferase (233 aa).

It belongs to the transferase hexapeptide repeat family. DapH subfamily.

It catalyses the reaction (S)-2,3,4,5-tetrahydrodipicolinate + acetyl-CoA + H2O = L-2-acetamido-6-oxoheptanedioate + CoA. It functions in the pathway amino-acid biosynthesis; L-lysine biosynthesis via DAP pathway; LL-2,6-diaminopimelate from (S)-tetrahydrodipicolinate (acetylase route): step 1/3. Catalyzes the transfer of an acetyl group from acetyl-CoA to tetrahydrodipicolinate. The chain is 2,3,4,5-tetrahydropyridine-2,6-dicarboxylate N-acetyltransferase from Enterococcus faecalis (strain ATCC 700802 / V583).